A 264-amino-acid chain; its full sequence is Teichoic acids export ATP-binding protein TagH (264 aa).

The ABC transporter domain occupies 24 to 243; it reads IKDALIPKNK…YEQFLKDFKK (220 aa). Residue 57 to 64 participates in ATP binding; sequence GINGSGKS.

The protein belongs to the ABC transporter superfamily. Teichoic acids exporter (TC 3.A.1.104.1) family. As to quaternary structure, the complex is composed of two ATP-binding proteins (TagH) and two transmembrane proteins (TagG).

It localises to the cell membrane. It catalyses the reaction ATP + H2O + teichoic acidSide 1 = ADP + phosphate + teichoic acidSide 2.. Part of the ABC transporter complex TagGH involved in teichoic acids export. Responsible for energy coupling to the transport system. In Staphylococcus haemolyticus (strain JCSC1435), this protein is Teichoic acids export ATP-binding protein TagH.